The chain runs to 202 residues: Large ribosomal subunit protein uL4 (202 aa).

Over residues 42 to 52 the composition is skewed to polar residues; it reads GTKAQKSRSQV. Residues 42 to 70 are disordered; it reads GTKAQKSRSQVSGTTKKSKKQKGGGARHG.

The protein belongs to the universal ribosomal protein uL4 family. Part of the 50S ribosomal subunit.

Its function is as follows. One of the primary rRNA binding proteins, this protein initially binds near the 5'-end of the 23S rRNA. It is important during the early stages of 50S assembly. It makes multiple contacts with different domains of the 23S rRNA in the assembled 50S subunit and ribosome. In terms of biological role, forms part of the polypeptide exit tunnel. This is Large ribosomal subunit protein uL4 from Xylella fastidiosa (strain 9a5c).